The following is a 664-amino-acid chain: Phosphomethylpyrimidine synthase (664 aa).

Residues asparagine 235, methionine 264, tyrosine 293, histidine 329, 349 to 351 (SRG), 390 to 393 (DGMR), and glutamate 429 each bind substrate. Zn(2+) is bound at residue histidine 433. Tyrosine 456 lines the substrate pocket. Histidine 497 is a binding site for Zn(2+). [4Fe-4S] cluster contacts are provided by cysteine 577, cysteine 580, and cysteine 585.

It belongs to the ThiC family. Homodimer. The cofactor is [4Fe-4S] cluster.

It catalyses the reaction 5-amino-1-(5-phospho-beta-D-ribosyl)imidazole + S-adenosyl-L-methionine = 4-amino-2-methyl-5-(phosphooxymethyl)pyrimidine + CO + 5'-deoxyadenosine + formate + L-methionine + 3 H(+). It participates in cofactor biosynthesis; thiamine diphosphate biosynthesis. Functionally, catalyzes the synthesis of the hydroxymethylpyrimidine phosphate (HMP-P) moiety of thiamine from aminoimidazole ribotide (AIR) in a radical S-adenosyl-L-methionine (SAM)-dependent reaction. The chain is Phosphomethylpyrimidine synthase from Shewanella amazonensis (strain ATCC BAA-1098 / SB2B).